Here is a 508-residue protein sequence, read N- to C-terminus: DNA polymerase II small subunit (508 aa).

Positions 66–80 are enriched in low complexity; that stretch reads ASSAAQTSAPASTPP. The segment at 66–122 is disordered; the sequence is ASSAAQTSAPASTPPDEATTHTDPSATDTPPNHDGGRAATADARSVEIDGDMTGAST. The segment covering 86–95 has biased composition (polar residues); it reads HTDPSATDTP.

It belongs to the DNA polymerase delta/II small subunit family. As to quaternary structure, heterodimer of a large subunit and a small subunit.

The enzyme catalyses DNA(n) + a 2'-deoxyribonucleoside 5'-triphosphate = DNA(n+1) + diphosphate. The catalysed reaction is Exonucleolytic cleavage in the 3'- to 5'-direction to yield nucleoside 5'-phosphates.. In terms of biological role, possesses two activities: a DNA synthesis (polymerase) and an exonucleolytic activity that degrades single-stranded DNA in the 3' to 5' direction. Has a template-primer preference which is characteristic of a replicative DNA polymerase. The polypeptide is DNA polymerase II small subunit (Halobacterium salinarum (strain ATCC 29341 / DSM 671 / R1)).